The sequence spans 559 residues: Nicotinate phosphoribosyltransferase 1 (559 aa).

2 residues coordinate nicotinate: Tyr-33 and Thr-221. Position 224 is a phosphohistidine (His-224). Nicotinate is bound at residue Arg-331. Residue Thr-393 coordinates 5-phospho-alpha-D-ribose 1-diphosphate.

The protein belongs to the NAPRTase family. Requires Mg(2+) as cofactor. It depends on Mn(2+) as a cofactor. In terms of processing, transiently phosphorylated on a His residue during the reaction cycle. Phosphorylation strongly increases the affinity for substrates and increases the rate of nicotinate D-ribonucleotide production. Dephosphorylation regenerates the low-affinity form of the enzyme, leading to product release.

The catalysed reaction is nicotinate + 5-phospho-alpha-D-ribose 1-diphosphate + ATP + H2O = nicotinate beta-D-ribonucleotide + ADP + phosphate + diphosphate. The protein operates within cofactor biosynthesis; NAD(+) biosynthesis; nicotinate D-ribonucleotide from nicotinate: step 1/1. Its function is as follows. Catalyzes the first step in the biosynthesis of NAD from nicotinic acid, the ATP-dependent synthesis of beta-nicotinate D-ribonucleotide from nicotinate and 5-phospho-D-ribose 1-phosphate. Helps prevent cellular oxidative stress via its role in NAD biosynthesis. The polypeptide is Nicotinate phosphoribosyltransferase 1 (Arabidopsis thaliana (Mouse-ear cress)).